The primary structure comprises 427 residues: UPF0415 protein C7orf25 homolog (427 aa).

The segment covering 200–234 has biased composition (acidic residues); sequence GGEEEDEEDQEGDHEDLVEEEEDGEDDNDDDSDDT. The tract at residues 200-236 is disordered; that stretch reads GGEEEDEEDQEGDHEDLVEEEEDGEDDNDDDSDDTDL.

This sequence belongs to the UPF0415 family.

The sequence is that of UPF0415 protein C7orf25 homolog from Danio rerio (Zebrafish).